The chain runs to 387 residues: uncharacterized protein (387 aa).

To M.jannaschii MJ0043 N-terminal region.

This is an uncharacterized protein from Bacillus subtilis (strain 168).